A 911-amino-acid polypeptide reads, in one-letter code: Chromatin assembly factor 1 subunit A (911 aa).

Positions 1-31 are binds PCNA; it reads MLEEPEAATRTAAAVDCKDRPGFPVKRLIQA. A disordered region spans residues 166–200; that stretch reads HMEEEPGSPGDPKRTGDCQAGSLQSCPELTPGSRT. A binds CBX1 and CBX3 chromo shadow domains region spans residues 176-327; that stretch reads DPKRTGDCQA…LHRDREQQRE (152 aa). Positions 186-200 are enriched in polar residues; it reads GSLQSCPELTPGSRT. Phosphoserine is present on residues S190 and S208. The PxVxL motif motif lies at 217 to 230; that stretch reads FIEKVPVVVLEDIL. Disordered regions lie at residues 250 to 408 and 578 to 618; these read SESE…EEEK and DSDD…VPHG. Residues 265-281 show a composition bias toward low complexity; it reads LSHSSTNSSSPTSSPEG. Residue S293 is modified to Phosphoserine. Residues 310–408 show a composition bias toward basic and acidic residues; it reads STEKGRSKLH…EEKRLREEEK (99 aa). Composition is skewed to acidic residues over residues 578–589 and 597–612; these read DSDDEWEEEEPG and GDEDDDVGEDEDEDDG. The tract at residues 621 to 657 is necessary for homodimerization and competence for chromatin assembly; that stretch reads SEDEGVTEECADPENHKVHQKLKAKEWDELLAKGKRF. The binds to p60 stretch occupies residues 639 to 911; sequence HQKLKAKEWD…APIPAPTLCK (273 aa). Phosphoserine is present on S776. Disordered regions lie at residues 819–843 and 866–886; these read PSAPREDSGSASTEGPGQSTPMLLK and GSGDMDGFQADTEEDEEDDTD. Polar residues predominate over residues 827 to 839; sequence GSASTEGPGQSTP. Residue T838 is modified to Phosphothreonine. The segment covering 876–886 has biased composition (acidic residues); the sequence is DTEEDEEDDTD.

Belongs to the CHAF1A family. As to quaternary structure, homodimer. Part of the CAF-1 complex that contains RBBP4, CHAF1B and CHAF1A. CHAF1A binds directly to CHAF1B. Only minor amounts of RBBP4 are complexed with CHAF1A and CHAF1B in G1 phase. Interacts with PCNA; the interaction is direct. Interacts (via the PxVxL motif) with CBX5; the interaction is direct. Interacts with MBD1. Interacts with histones H3.1, H3.2 and H3.1t.

It localises to the nucleus. Its function is as follows. Acts as a component of the histone chaperone complex chromatin assembly factor 1 (CAF-1), which assembles histone octamers onto DNA during replication and repair. CAF-1 performs the first step of the nucleosome assembly process, bringing newly synthesized histones H3 and H4 to replicating DNA; histones H2A/H2B can bind to this chromatin precursor subsequent to DNA replication to complete the histone octamer. It may play a role in heterochromatin maintenance in proliferating cells by bringing newly synthesized cbx proteins to heterochromatic DNA replication foci. This chain is Chromatin assembly factor 1 subunit A, found in Mus musculus (Mouse).